The following is a 544-amino-acid chain: Chaperonin GroEL (544 aa).

ATP is bound by residues 30-33 (TLGP), Lys51, 87-91 (DGTTT), Gly415, and Asp495.

This sequence belongs to the chaperonin (HSP60) family. In terms of assembly, forms a cylinder of 14 subunits composed of two heptameric rings stacked back-to-back. Interacts with the co-chaperonin GroES.

The protein localises to the cytoplasm. It catalyses the reaction ATP + H2O + a folded polypeptide = ADP + phosphate + an unfolded polypeptide.. Its function is as follows. Together with its co-chaperonin GroES, plays an essential role in assisting protein folding. The GroEL-GroES system forms a nano-cage that allows encapsulation of the non-native substrate proteins and provides a physical environment optimized to promote and accelerate protein folding. In Neisseria flavescens, this protein is Chaperonin GroEL.